The following is a 580-amino-acid chain: Glypican-3 (580 aa).

Positions 1–24 (MAGTVRTACLVVAMLLSLDFPGQA) are cleaved as a signal peptide. Gln-25 is subject to Pyrrolidone carboxylic acid. 7 disulfides stabilise this stretch: Cys-35–Cys-72, Cys-65–Cys-262, Cys-73–Cys-265, Cys-197–Cys-349, Cys-252–Cys-285, Cys-274–Cys-422, and Cys-278–Cys-410. Asn-124 and Asn-241 each carry an N-linked (GlcNAc...) asparagine glycan. Ser-352 is subject to Phosphoserine; by FAM20C. N-linked (GlcNAc...) asparagine glycosylation is present at Asn-418. O-linked (Xyl...) (glycosaminoglycan) serine glycans are attached at residues Ser-495 and Ser-509. Residue Asn-554 is the site of GPI-anchor amidated asparagine attachment. A propeptide spans 555 to 580 (LGNVHSPLKLLTSMAISVVCFFFLVH) (removed in mature form).

It belongs to the glypican family. As to quaternary structure, heterodimer; disulfide-linked. Cleavage by a furin-like convertase results in production of alpha and beta chains which form a disulfide-linked heterodimer. Interacts with DPP4. Interacts with FGF2. Interacts with WNT5A. Also interacts with WNT3A and WNT7B. Interacts with hedgehog protein SHH; the heparan sulfate chains are not required for the interaction. Also interacts with hedgehog protein IHH. Interacts with CD81. Interacts with Wnt receptors FZD4, FZD7 and FZD8; the heparan sulfate chains are required for the interaction. O-glycosylated; contains heparan sulfate and/or chondroitin sulfate. Post-translationally, cleaved intracellularly by a furin-like convertase to generate 2 subunits, alpha and beta, which remain associated through disulfide bonds and are associated with the cell surface via the GPI-anchor. This processing is essential for its role in inhibition of hedgehog signaling. A second proteolytic event may result in cleavage of the protein on the cell surface, separating it from the GPI-anchor and leading to its shedding from the cell surface. As to expression, detected in placenta (at protein level). Highly expressed in lung, liver and kidney.

Its subcellular location is the cell membrane. Its function is as follows. Cell surface proteoglycan. Negatively regulates the hedgehog signaling pathway when attached via the GPI-anchor to the cell surface by competing with the hedgehog receptor PTC1 for binding to hedgehog proteins. Binding to the hedgehog protein SHH triggers internalization of the complex by endocytosis and its subsequent lysosomal degradation. Positively regulates the canonical Wnt signaling pathway by binding to the Wnt receptor Frizzled and stimulating the binding of the Frizzled receptor to Wnt ligands. Positively regulates the non-canonical Wnt signaling pathway. Binds to CD81 which decreases the availability of free CD81 for binding to the transcriptional repressor HHEX, resulting in nuclear translocation of HHEX and transcriptional repression. Inhibits the dipeptidyl peptidase activity of DPP4. Plays a role in limb patterning and skeletal development by controlling the cellular response to BMP4. Modulates the effects of growth factors BMP2, BMP7 and FGF7 on renal branching morphogenesis. Required for coronary vascular development. Plays a role in regulating cell movements during gastrulation. In Homo sapiens (Human), this protein is Glypican-3 (GPC3).